A 143-amino-acid chain; its full sequence is 3-hydroxyacyl-[acyl-carrier-protein] dehydratase FabZ (143 aa).

Histidine 48 is an active-site residue.

The protein belongs to the thioester dehydratase family. FabZ subfamily.

Its subcellular location is the cytoplasm. It carries out the reaction a (3R)-hydroxyacyl-[ACP] = a (2E)-enoyl-[ACP] + H2O. Its function is as follows. Involved in unsaturated fatty acids biosynthesis. Catalyzes the dehydration of short chain beta-hydroxyacyl-ACPs and long chain saturated and unsaturated beta-hydroxyacyl-ACPs. The polypeptide is 3-hydroxyacyl-[acyl-carrier-protein] dehydratase FabZ (Roseiflexus sp. (strain RS-1)).